The chain runs to 681 residues: Ribosomal L1 domain-containing protein CG13096 (681 aa).

Disordered stretches follow at residues 1-248 (MVKV…AKSK) and 579-681 (DAAP…DDEE). Phosphoserine occurs at positions 15 and 17. Over residues 54 to 74 (VKKDAIKKEPEVSKKGAEKKQ) the composition is skewed to basic and acidic residues. Serine 89 is modified (phosphoserine). The span at 103 to 112 (KPAASGAPVG) shows a compositional bias: low complexity. Serine 128 is modified (phosphoserine). Residues 189 to 217 (QAAPAKPAKAQPASQLQKKAKAVQKLSKP) show a composition bias toward low complexity. Positions 599 to 610 (KESSSEGAKADA) are enriched in basic and acidic residues. The segment covering 611–681 (ESDEEEEVEE…EDDDDDDDEE (71 aa)) has biased composition (acidic residues).

It belongs to the universal ribosomal protein uL1 family. Highly divergent.

The polypeptide is Ribosomal L1 domain-containing protein CG13096 (Drosophila melanogaster (Fruit fly)).